A 116-amino-acid polypeptide reads, in one-letter code: Ribosome-binding factor A (116 aa).

This sequence belongs to the RbfA family. Monomer. Binds 30S ribosomal subunits, but not 50S ribosomal subunits or 70S ribosomes.

Its subcellular location is the cytoplasm. Functionally, one of several proteins that assist in the late maturation steps of the functional core of the 30S ribosomal subunit. Associates with free 30S ribosomal subunits (but not with 30S subunits that are part of 70S ribosomes or polysomes). Required for efficient processing of 16S rRNA. May interact with the 5'-terminal helix region of 16S rRNA. This chain is Ribosome-binding factor A, found in Ureaplasma parvum serovar 3 (strain ATCC 27815 / 27 / NCTC 11736).